A 5101-amino-acid polypeptide reads, in one-letter code: Malformin synthetase mlfA (5101 aa).

The adenylation 1 stretch occupies residues 225-616 (ERHAANRPHS…CGRADTQVKL (392 aa)). One can recognise a Carrier 1 domain in the interval 757–830 (SRLEQKIQLA…EAASLAEVQE (74 aa)). An O-(pantetheine 4'-phosphoryl)serine modification is found at Ser791. Positions 868–1299 (EDVFPCTTMQ…ALNTLSLLQA (432 aa)) are condensation 1. Positions 1327 to 1716 (DRWVTRQPEG…GRKDTQVKLR (390 aa)) are adenylation 2. Positions 1854–1931 (TPTLELERTL…QLAAEVGEPA (78 aa)) constitute a Carrier 2 domain. An O-(pantetheine 4'-phosphoryl)serine modification is found at Ser1891. Disordered stretches follow at residues 1932 to 1961 (GQSASSASSTTEEGFTFSTPDDSSTNDGVD) and 1994 to 2020 (GGSSSNKTPSVSSSSSSSSSSKRKKNA). Composition is skewed to low complexity over residues 1934 to 1958 (SASSASSTTEEGFTFSTPDDSSTND) and 1996 to 2013 (SSSNKTPSVSSSSSSSSS). Residues 2066–2481 (EDIYPATALQ…AVSCSDKETL (416 aa)) form a condensation 2 region. Residues 2504-2896 (RRTPHAPAVC…IGRRDGQLKL (393 aa)) form an adenylation 3 region. The Carrier 3 domain maps to 3032–3108 (RPVTSQEHEM…QLICHLNTIR (77 aa)). The residue at position 3069 (Ser3069) is an O-(pantetheine 4'-phosphoryl)serine. Condensation regions lie at residues 3125–3590 (WVAL…TYDQ) and 3611–4030 (NIYP…EHLV). The adenylation 4 stretch occupies residues 4055-4445 (HNSRQAVCAW…VGRKDNQIKF (391 aa)). The region spanning 4579 to 4655 (MPSTAAERKM…DLSDQAKSLI (77 aa)) is the Carrier 4 domain. Ser4616 bears the O-(pantetheine 4'-phosphoryl)serine mark. Residues 4712–5097 (IVVDIPGPID…KIVGLLRHPE (386 aa)) are condensation 5.

Belongs to the NRP synthetase family.

Its pathway is secondary metabolite biosynthesis. Nonribosomal peptide synthetase; part of the gene cluster that mediates the biosynthesis of malformins, cyclic pentapeptides with a disulfide bond between 2 consecutive cysteins, that show potential anti-tumor as well as antimalarial and antitrypanosomal properties. The nonribosomal peptide synthetase mlfA is responsible of the formation of the cyclic pentapeptide. The malformin biosynthesis clusters in malformin-producing fungi also contain enzymes involved in the formation of the disulfide bond between the two consecutive cysteins within malformins, in addition to additional tailoring enzymes such as methyltransferases or oxidoreductases. They are also composed of up to 4 major facilitator superfamily transporters, and transcription factors probably involved in the regulation of the expression of those clusters. This is Malformin synthetase mlfA from Aspergillus kawachii (strain NBRC 4308) (White koji mold).